Here is a 652-residue protein sequence, read N- to C-terminus: Aorsin (652 aa).

An N-terminal signal peptide occupies residues Met-1–Ala-22. A propeptide spans Ala-23–Lys-215 (removed in mature form). The N-linked (GlcNAc...) asparagine glycan is linked to Asn-112. The disordered stretch occupies residues Val-177–Gln-211. A compositionally biased stretch (basic residues) spans Ser-188–Leu-201. Residues Asn-218 and Asn-247 are each glycosylated (N-linked (GlcNAc...) asparagine). Positions Leu-225–Leu-651 constitute a Peptidase S53 domain. Active-site charge relay system residues include Glu-301 and Asp-305. Residues Asn-331 and Asn-445 are each glycosylated (N-linked (GlcNAc...) asparagine). Catalysis depends on Ser-569, which acts as the Charge relay system. Positions 610 and 611 each coordinate Ca(2+). Asn-613 is a glycosylation site (N-linked (GlcNAc...) asparagine). The Ca(2+) site is built by Gly-629 and Asp-631.

The cofactor is Ca(2+). In terms of processing, N-glycosylated. Post-translationally, O-glycosylated.

The protein resides in the secreted. Its subcellular location is the extracellular space. Inhibited by antipain and leupeptin. Its function is as follows. Serine endopeptidase which hydrolyzes a range of fluorogenic peptide substrates containing the basic residues arginine or lysine at the P1 position and prefers paired basic resides. Also hydrolyzes clupeine and salmine, activates plasminogen and converts trypsinogen to trypsin. The protein is Aorsin of Aspergillus oryzae (strain ATCC 42149 / RIB 40) (Yellow koji mold).